A 471-amino-acid polypeptide reads, in one-letter code: Mannose-1-phosphate guanylyltransferase (471 aa).

This sequence belongs to the mannose-6-phosphate isomerase type 2 family.

It carries out the reaction alpha-D-mannose 1-phosphate + GTP + H(+) = GDP-alpha-D-mannose + diphosphate. The protein operates within nucleotide-sugar biosynthesis; GDP-alpha-D-mannose biosynthesis; GDP-alpha-D-mannose from alpha-D-mannose 1-phosphate (GTP route): step 1/1. It functions in the pathway bacterial outer membrane biogenesis; LPS O-antigen biosynthesis. In terms of biological role, involved in GDP-mannose biosynthesis which serves as the activated sugar nucleotide precursor for mannose residues in cell surface polysaccharides. This enzyme participates in synthesis of the LPS O9 antigen. In Escherichia coli, this protein is Mannose-1-phosphate guanylyltransferase (manC).